The chain runs to 782 residues: Cysteine-rich protein 2-binding protein (782 aa).

A Phosphoserine modification is found at Ser-4. A disordered region spans residues Arg-13 to Glu-33. Lys-231 is modified (N6-acetyllysine). The disordered stretch occupies residues Pro-251 to Leu-282. Over residues Met-256–Lys-276 the composition is skewed to basic and acidic residues. Ser-285 bears the Phosphoserine mark. At Lys-292 the chain carries N6-acetyllysine. Over residues Leu-315–Ser-335 the composition is skewed to low complexity. 2 disordered regions span residues Leu-315–Thr-346 and Val-400–Tyr-460. Composition is skewed to basic and acidic residues over residues Arg-405–Ile-426 and Lys-446–Arg-459. A Phosphoserine modification is found at Ser-416. In terms of domain architecture, N-acetyltransferase spans Leu-638 to Arg-782.

In terms of assembly, interacts with the LIM 1 domain of CSRP2. Component of the ADA2A-containing complex (ATAC), composed of CSRP2BP, KAT2A, TADA2L, TADA3L, ZZ3, MBIP, WDR5, YEATS2, CCDC101 and DR1. In the complex, it probably interacts directly with KAT2A, MBIP and WDR5. As to expression, expressed in skeletal muscle, heart, lung, placenta, brain, liver, pancreas and kidney. High expression in skeletal muscle and heart. Lower expression in lung.

Its subcellular location is the nucleus. It localises to the cytoplasm. Component of the ATAC complex, a complex with histone acetyltransferase activity on histones H3 and H4. May function as a scaffold for the ATAC complex to promote ATAC complex stability. Has also weak histone acetyltransferase activity toward histone H4. Required for the normal progression through G1 and G2/M phases of the cell cycle. The chain is Cysteine-rich protein 2-binding protein from Homo sapiens (Human).